The chain runs to 349 residues: Lachesin (349 aa).

An N-terminal signal peptide occupies residues 1 to 18 (MDLRLYTIFVGFFSVVYA). The region spanning 22-127 (PTISYISQEQ…NKITAEVDLQ (106 aa)) is the Ig-like V-type domain. Cys43 and Cys110 are oxidised to a cystine. 2 Ig-like C2-type domains span residues 132–218 (PVIS…IAVE) and 222–315 (PPVI…VELF). An N-linked (GlcNAc...) asparagine glycan is attached at Asn137. Disulfide bonds link Cys154–Cys201 and Cys244–Cys299. Gly332 is lipidated: GPI-anchor amidated glycine. The propeptide at 333 to 349 (DAAEISTSMALILISTI) is removed in mature form.

The N-terminus is blocked. As to expression, expressed by all neurogenic cells early, but only those cells that become neuroblasts continue to express it. Expressed by neuroblasts, ganglion mother cells and neurons early in their lives, but expression becomes restricted to a subset of neurons as development progresses. Expressed by sensory neurons as they delaminate from the body wall ectoderm. It is also present on growing axons of the CNS and PNS and becomes restricted to a subset of axons later in development.

It localises to the cell membrane. Its function is as follows. May play a role in early neuronal differentiation and axon outgrowth. This Schistocerca americana (American grasshopper) protein is Lachesin (LAC).